The following is a 44-amino-acid chain: Photosystem I reaction center subunit IX (44 aa).

A helical membrane pass occupies residues 9-29 (YMRSAPVVAAAWITMTAGIII).

It belongs to the PsaJ family.

The protein localises to the cellular thylakoid membrane. In terms of biological role, may help in the organization of the PsaE and PsaF subunits. This Prochlorococcus marinus (strain MIT 9312) protein is Photosystem I reaction center subunit IX.